We begin with the raw amino-acid sequence, 456 residues long: ATP synthase subunit beta 1 (456 aa).

An ATP-binding site is contributed by 152–159 (GGAGVGKS).

It belongs to the ATPase alpha/beta chains family. F-type ATPases have 2 components, CF(1) - the catalytic core - and CF(0) - the membrane proton channel. CF(1) has five subunits: alpha(3), beta(3), gamma(1), delta(1), epsilon(1). CF(0) has three main subunits: a(1), b(2) and c(9-12). The alpha and beta chains form an alternating ring which encloses part of the gamma chain. CF(1) is attached to CF(0) by a central stalk formed by the gamma and epsilon chains, while a peripheral stalk is formed by the delta and b chains.

The protein resides in the cell membrane. The catalysed reaction is ATP + H2O + 4 H(+)(in) = ADP + phosphate + 5 H(+)(out). Functionally, produces ATP from ADP in the presence of a proton gradient across the membrane. The catalytic sites are hosted primarily by the beta subunits. This Listeria monocytogenes serovar 1/2a (strain ATCC BAA-679 / EGD-e) protein is ATP synthase subunit beta 1.